A 409-amino-acid polypeptide reads, in one-letter code: MSHPEAPITPEVEADLAIARRGCDELLVESEFARKLARSRATGVPLRIKLGLDPTAPDIHLGHTVVLNKMRQLQDLGHNVIFLIGDFTSTIGDPSGRNSTRPPLTREQIETNAKTYYAQASLVLDPARTEIRYNSEWCDPLGARGMIQLASRYTVARMMEREDFTRRFKGGVPIAVHEFLYPLLQGYDSVALKADLELGGTDQKFNLLVGRELQKEYGQEQQCILTMPLLVGTDGVEKMSKSKGNYIGISEAPESMFGKLMSISDTLMWRYYELLSFRSLADIAALKAEIDGGRNPRDAKVALAQEIVARFHSPQAAEAALAAFEARFRDGAIPEDMPEVTVGGAPQGILRILREAGLVASGSEAQRNVEQGGVRVNGDRVEDKSLQLSAGTYVVQVGKRKFARVKLVG.

The 'HIGH' region motif lies at 54-63 (PTAPDIHLGH). The 'KMSKS' region motif lies at 238–242 (KMSKS). Lys241 is a binding site for ATP. The region spanning 347-407 (QGILRILREA…GKRKFARVKL (61 aa)) is the S4 RNA-binding domain.

This sequence belongs to the class-I aminoacyl-tRNA synthetase family. TyrS type 2 subfamily. Homodimer.

The protein localises to the cytoplasm. It catalyses the reaction tRNA(Tyr) + L-tyrosine + ATP = L-tyrosyl-tRNA(Tyr) + AMP + diphosphate + H(+). Its function is as follows. Catalyzes the attachment of tyrosine to tRNA(Tyr) in a two-step reaction: tyrosine is first activated by ATP to form Tyr-AMP and then transferred to the acceptor end of tRNA(Tyr). This Bordetella pertussis (strain Tohama I / ATCC BAA-589 / NCTC 13251) protein is Tyrosine--tRNA ligase.